We begin with the raw amino-acid sequence, 46 residues long: Iota-conotoxin-like Fi11.8 (46 aa).

2 positions are modified to 4-hydroxyproline: Pro2 and Pro11. 4 disulfides stabilise this stretch: Cys5–Cys19, Cys12–Cys22, Cys18–Cys27, and Cys21–Cys38. Pro29 is modified (4-hydroxyproline). Trp33 bears the 6'-bromotryptophan mark. Position 44 is a D-phenylalanine (Phe44).

It belongs to the conotoxin I1 superfamily. Expressed by the venom duct.

The protein localises to the secreted. In terms of biological role, iota-conotoxins bind to voltage-gated sodium channels (Nav) and act as agonists by shifting the voltage-dependence of activation to more hyperpolarized levels. Produces general excitatory symptoms. This chain is Iota-conotoxin-like Fi11.8, found in Conus figulinus (Fig cone).